The following is a 319-amino-acid chain: Cell division protein PomZ (319 aa).

61-68 (KGGTGKTS) lines the ATP pocket.

It belongs to the ParA family. As to quaternary structure, interacts with FtsZ in pull-down experiments.

It localises to the cytoplasm. In terms of biological role, spatial regulator of cell division that is involved in identifying the incipient division site, recruiting FtsZ to the division site and stabilizing the Z-ring. Binds ATP and GTP. In Myxococcus xanthus (strain DK1622), this protein is Cell division protein PomZ.